The sequence spans 579 residues: Protein disulfide isomerase-like 1-3 (579 aa).

The first 25 residues, 1 to 25 (MASSSTSISLLLFVSFILLLVNSRA), serve as a signal peptide directing secretion. N-linked (GlcNAc...) asparagine glycosylation is present at asparagine 27. Basic and acidic residues-rich tracts occupy residues 44 to 69 (EESK…RDFE) and 80 to 89 (EFHHGDHGYE). The tract at residues 44 to 91 (EESKEQSHGGGSYHEEEHDHQHRDFENYDDLEQGGGEFHHGDHGYEEE) is disordered. Residues 81–204 (FHHGDHGYEE…IVTWLKKKAS (124 aa)) enclose the Thioredoxin 1 domain. 2 N-linked (GlcNAc...) asparagine glycosylation sites follow: asparagine 108 and asparagine 115. Active-site nucleophile residues include cysteine 128 and cysteine 131. The cysteines at positions 128 and 131 are disulfide-linked. N-linked (GlcNAc...) asparagine glycans are attached at residues asparagine 209, asparagine 293, asparagine 313, and asparagine 338. Residues 416 to 546 (DFLADKLKPF…LYKFLKKHAS (131 aa)) form the Thioredoxin 2 domain. Residues cysteine 467 and cysteine 470 each act as nucleophile in the active site. Cysteine 467 and cysteine 470 are disulfide-bonded. An N-linked (GlcNAc...) asparagine glycan is attached at asparagine 520. The segment at 558–579 (EPVISTMKSDEKIEGDSSKDEL) is disordered. The segment covering 565–579 (KSDEKIEGDSSKDEL) has biased composition (basic and acidic residues). A Prevents secretion from ER motif is present at residues 576 to 579 (KDEL).

It belongs to the protein disulfide isomerase family. As to expression, widely expressed.

Its subcellular location is the endoplasmic reticulum lumen. It catalyses the reaction Catalyzes the rearrangement of -S-S- bonds in proteins.. Functionally, acts as a protein-folding catalyst that interacts with nascent polypeptides to catalyze the formation, isomerization, and reduction or oxidation of disulfide bonds. The polypeptide is Protein disulfide isomerase-like 1-3 (PDIL1-3) (Arabidopsis thaliana (Mouse-ear cress)).